The chain runs to 76 residues: Small ribosomal subunit protein bS18 (76 aa).

Belongs to the bacterial ribosomal protein bS18 family. In terms of assembly, part of the 30S ribosomal subunit. Forms a tight heterodimer with protein bS6.

In terms of biological role, binds as a heterodimer with protein bS6 to the central domain of the 16S rRNA, where it helps stabilize the platform of the 30S subunit. The polypeptide is Small ribosomal subunit protein bS18 (Xanthomonas euvesicatoria pv. vesicatoria (strain 85-10) (Xanthomonas campestris pv. vesicatoria)).